The primary structure comprises 184 residues: Ribosome-recycling factor (184 aa).

It belongs to the RRF family.

Its subcellular location is the cytoplasm. Responsible for the release of ribosomes from messenger RNA at the termination of protein biosynthesis. May increase the efficiency of translation by recycling ribosomes from one round of translation to another. This Acinetobacter baylyi (strain ATCC 33305 / BD413 / ADP1) protein is Ribosome-recycling factor.